A 128-amino-acid chain; its full sequence is Fluoride-specific ion channel FluC (128 aa).

4 helical membrane passes run 5–25 (IVAIFVGAGFGALLRWFLSIG), 35–55 (LGTLASNLIGGYLIGIAVVAF), 67–87 (LFVITGFMGGLTTFSTYSVEV), and 96–116 (FGWALAVAALHLIGSFTLTGL). Residues Gly75 and Thr78 each coordinate Na(+).

Belongs to the fluoride channel Fluc/FEX (TC 1.A.43) family.

It localises to the cell inner membrane. It carries out the reaction fluoride(in) = fluoride(out). Its activity is regulated as follows. Na(+) is not transported, but it plays an essential structural role and its presence is essential for fluoride channel function. Its function is as follows. Fluoride-specific ion channel. Important for reducing fluoride concentration in the cell, thus reducing its toxicity. In Burkholderia mallei (strain NCTC 10247), this protein is Fluoride-specific ion channel FluC.